Consider the following 299-residue polypeptide: 33 kDa chaperonin (299 aa).

2 cysteine pairs are disulfide-bonded: Cys-239–Cys-241 and Cys-272–Cys-275.

The protein belongs to the HSP33 family. Post-translationally, under oxidizing conditions two disulfide bonds are formed involving the reactive cysteines. Under reducing conditions zinc is bound to the reactive cysteines and the protein is inactive.

Its subcellular location is the cytoplasm. Redox regulated molecular chaperone. Protects both thermally unfolding and oxidatively damaged proteins from irreversible aggregation. Plays an important role in the bacterial defense system toward oxidative stress. This is 33 kDa chaperonin from Acaryochloris marina (strain MBIC 11017).